Reading from the N-terminus, the 259-residue chain is MKHSKKLLLCISFLLITFFISGCGFMNKDDSKETEIKKSFNKTLSMYPIKNLEDLYDKEGYRDEEFDKDDKGTWLLHSEMAIQRKGEDLETRGMVLKINRNTQTSKGDYITNKITYDNKGRPQSNKKKYPVKMENNKIIPIKKIEDSKINREINEFKFFAQYANFKELKDYKNGNISYNPNVPSYSAEYDLENTDYNVKQLRERYDIPTKQAPKLLLKGTGDLKGSSIGTKDVEFTFVKGKQENIYFSDSMNFMPSEDD.

Residues 1-22 (MKHSKKLLLCISFLLITFFISG) form the signal peptide. Residue cysteine 23 is the site of N-palmitoyl cysteine attachment. Cysteine 23 carries the S-diacylglycerol cysteine lipid modification.

The protein belongs to the staphylococcal tandem lipoprotein family.

It is found in the cell membrane. This is an uncharacterized protein from Staphylococcus epidermidis (strain ATCC 35984 / DSM 28319 / BCRC 17069 / CCUG 31568 / BM 3577 / RP62A).